The chain runs to 191 residues: Putative 3-methyladenine DNA glycosylase (191 aa).

Belongs to the DNA glycosylase MPG family.

The polypeptide is Putative 3-methyladenine DNA glycosylase (Cutibacterium acnes (strain DSM 16379 / KPA171202) (Propionibacterium acnes)).